Reading from the N-terminus, the 335-residue chain is Mesoderm-specific transcript protein (335 aa).

Helical transmembrane passes span W13–P33 and V63–Y83. Residues I71–D310 enclose the AB hydrolase-1 domain. Positions R98–D103 match the RVIALD motif. The N-linked (GlcNAc...) asparagine glycan is linked to N163. Residues V266–I286 form a helical membrane-spanning segment.

Belongs to the AB hydrolase superfamily. In terms of tissue distribution, expressed in mesodermal tissues. Isoform 1 is exclusively expressed from the paternal allele in all fetal tissues and cell lines examined, whereas isoform 2 is preferentially expressed from the paternal allele in a tissue-type-specific manner.

It is found in the endoplasmic reticulum membrane. The chain is Mesoderm-specific transcript protein (Mest) from Mus musculus (Mouse).